Consider the following 473-residue polypeptide: Putative malate dehydrogenase 1B (473 aa).

The protein belongs to the LDH/MDH superfamily. MDH type 2 family.

This chain is Putative malate dehydrogenase 1B (MDH1B), found in Bos taurus (Bovine).